The chain runs to 729 residues: 1,4-alpha-glucan branching enzyme GlgB (729 aa).

Asp409 (nucleophile) is an active-site residue. The active-site Proton donor is Glu462.

Belongs to the glycosyl hydrolase 13 family. GlgB subfamily. In terms of assembly, monomer.

It carries out the reaction Transfers a segment of a (1-&gt;4)-alpha-D-glucan chain to a primary hydroxy group in a similar glucan chain.. The protein operates within glycan biosynthesis; glycogen biosynthesis. Its function is as follows. Catalyzes the formation of the alpha-1,6-glucosidic linkages in glycogen by scission of a 1,4-alpha-linked oligosaccharide from growing alpha-1,4-glucan chains and the subsequent attachment of the oligosaccharide to the alpha-1,6 position. The polypeptide is 1,4-alpha-glucan branching enzyme GlgB (Saccharophagus degradans (strain 2-40 / ATCC 43961 / DSM 17024)).